Consider the following 595-residue polypeptide: Merlin (595 aa).

S13 carries the phosphoserine modification. The FERM domain occupies 22 to 311; sequence FTVRIVTMDA…GNHDLFMRRR (290 aa). The residue at position 518 (S518) is a Phosphoserine; by PAK.

Interacts with NHERF1, HGS and AGAP2. Interacts with LAYN. Interacts with SGSM3. Interacts (via FERM domain) with MPP1. Interacts with WWC1. Interacts with the CUL4A-RBX1-DDB1-VprBP/DCAF1 E3 ubiquitin-protein ligase complex. The unphosphorylated form interacts (via FERM domain) with VPRBP/DCAF1. Interacts (via FERM domain) with NOP53; the interaction is direct. Interacts with SCHIP1; the interaction is direct. In terms of processing, phosphorylation of Ser-518 inhibits nuclear localization by disrupting the intramolecular association of the FERM domain with the C-terminal tail. The dephosphorylation of Ser-518 favors the interaction with NOP53. Ubiquitinated by the CUL4A-RBX1-DDB1-DCAF1/VprBP E3 ubiquitin-protein ligase complex for ubiquitination and subsequent proteasome-dependent degradation. In terms of tissue distribution, widely expressed. Isoform 1 and isoform 3 are predominant. Isoform 4, isoform 5 and isoform 6 are expressed moderately. Isoform 8 is found at low frequency. Isoform 7, isoform 9 and isoform 10 are not expressed in adult tissues, with the exception of adult retina expressing isoform 10. Isoform 9 is faintly expressed in fetal brain, heart, lung, skeletal muscle and spleen. Fetal thymus expresses isoforms 1, 7, 9 and 10 at similar levels.

Its subcellular location is the cell projection. It localises to the filopodium membrane. It is found in the ruffle membrane. The protein resides in the nucleus. The protein localises to the cytoplasm. Its subcellular location is the perinuclear region. It localises to the cytoplasmic granule. It is found in the cytoskeleton. Its function is as follows. Probable regulator of the Hippo/SWH (Sav/Wts/Hpo) signaling pathway, a signaling pathway that plays a pivotal role in tumor suppression by restricting proliferation and promoting apoptosis. Along with WWC1 can synergistically induce the phosphorylation of LATS1 and LATS2 and can probably function in the regulation of the Hippo/SWH (Sav/Wts/Hpo) signaling pathway. May act as a membrane stabilizing protein. May inhibit PI3 kinase by binding to AGAP2 and impairing its stimulating activity. Suppresses cell proliferation and tumorigenesis by inhibiting the CUL4A-RBX1-DDB1-VprBP/DCAF1 E3 ubiquitin-protein ligase complex. The chain is Merlin (NF2) from Homo sapiens (Human).